Here is an 83-residue protein sequence, read N- to C-terminus: Large ribosomal subunit protein bL27 (83 aa).

Belongs to the bacterial ribosomal protein bL27 family.

This Thermotoga maritima (strain ATCC 43589 / DSM 3109 / JCM 10099 / NBRC 100826 / MSB8) protein is Large ribosomal subunit protein bL27 (rpmA).